The sequence spans 286 residues: Nucleotide-binding protein PSPA7_5038 (286 aa).

Residue 8 to 15 (GRSGSGKS) coordinates ATP. Residue 60–63 (DARN) coordinates GTP.

This sequence belongs to the RapZ-like family.

Displays ATPase and GTPase activities. This is Nucleotide-binding protein PSPA7_5038 from Pseudomonas paraeruginosa (strain DSM 24068 / PA7) (Pseudomonas aeruginosa (strain PA7)).